A 1429-amino-acid polypeptide reads, in one-letter code: Inactive rhomboid protein 1 (1429 aa).

Disordered stretches follow at residues 1–36, 560–579, and 740–766; these read MSSN…STRR, GNED…PDRP, and TSAL…QPGA. Topologically, residues 1–843 are cytoplasmic; it reads MSSNGSDLGH…RPFFTYWINT (843 aa). The span at 22 to 33 shows a compositional bias: low complexity; sequence SVHSSMRGSMSS. Composition is skewed to polar residues over residues 564-573 and 740-763; these read AGQSNGTNGN and TSAL…SSHQ. A helical membrane pass occupies residues 844-864; sequence VQVVVLILSIICYGIAPIGIG. Residues 865–1099 are Lumenal-facing; sequence SEQKTGQVLV…PDQLYRLLTS (235 aa). Residues 1100–1120 form a helical membrane-spanning segment; it reads LCMHAGILHLAITLIFQHLFL. At 1121-1131 the chain is on the cytoplasmic side; sequence ADLERLIGTVR. Residues 1132 to 1152 traverse the membrane as a helical segment; it reads TAIVYIMSGFAGNLTSAILVP. Residues 1153–1156 are Lumenal-facing; it reads HRPE. Residues 1157-1177 form a helical membrane-spanning segment; sequence VGPSASLSGVVASLIALLVWM. Residues 1178 to 1186 lie on the Cytoplasmic side of the membrane; it reads HWKYLHKPH. The helical transmembrane segment at 1187 to 1207 threads the bilayer; that stretch reads IALFKLLLLCSVLVGIGTLPY. Residues 1208–1210 lie on the Lumenal side of the membrane; the sequence is QLN. Residues 1211–1231 traverse the membrane as a helical segment; it reads FLGLLAGVICGCLLTMSLVPF. The Cytoplasmic portion of the chain corresponds to 1232–1245; that stretch reads TTFSKYGRKKKINL. The chain crosses the membrane as a helical span at residues 1246 to 1266; that stretch reads IWTCVLFHVVVYTAMIVTFYI. The Lumenal portion of the chain corresponds to 1267-1429; sequence HPSEFHSISF…INNNTEFNVL (163 aa).

This sequence belongs to the peptidase S54 family. In terms of tissue distribution, specifically expressed in the nervous system and in brain.

It localises to the endoplasmic reticulum membrane. Functionally, rhomboid protease-like protein which has no protease activity but regulates the secretion of several ligands of the epidermal growth factor receptor. Indirectly activates the epidermal growth factor receptor signaling pathway and may thereby regulate sleep, cell survival, proliferation and migration. In Drosophila melanogaster (Fruit fly), this protein is Inactive rhomboid protein 1 (rho-5).